The primary structure comprises 298 residues: Ethanolamine ammonia-lyase small subunit (298 aa).

Residues 17 to 37 are disordered; that stretch reads MGQDVPQPVAPSKQEGAKPQC. 3 residues coordinate adenosylcob(III)alamin: valine 210, glutamate 231, and cysteine 261.

The protein belongs to the EutC family. In terms of assembly, the basic unit is a heterodimer which dimerizes to form tetramers. The heterotetramers trimerize; 6 large subunits form a core ring with 6 small subunits projecting outwards. Adenosylcob(III)alamin serves as cofactor.

It is found in the bacterial microcompartment. It catalyses the reaction ethanolamine = acetaldehyde + NH4(+). The protein operates within amine and polyamine degradation; ethanolamine degradation. In terms of biological role, catalyzes the deamination of various vicinal amino-alcohols to oxo compounds. Allows this organism to utilize ethanolamine as the sole source of nitrogen and carbon in the presence of external vitamin B12. This chain is Ethanolamine ammonia-lyase small subunit, found in Salmonella paratyphi A (strain ATCC 9150 / SARB42).